The primary structure comprises 529 residues: Glycerol kinase 5 (529 aa).

ATP-binding residues include Thr-22 and Thr-23. Residues Arg-92, Asp-269, and Gln-270 each contribute to the glycerol site. ATP-binding residues include Thr-291, Gly-334, and Gly-434.

It belongs to the FGGY kinase family.

The protein resides in the cytoplasm. It carries out the reaction glycerol + ATP = sn-glycerol 3-phosphate + ADP + H(+). The protein operates within polyol metabolism; glycerol degradation via glycerol kinase pathway; sn-glycerol 3-phosphate from glycerol: step 1/1. Functionally, skin-specific kinase that plays a key role in glycerol metabolism, catalyzing its phosphorylation to produce sn-glycerol 3-phosphate. Involved in skin-specific regulation of sterol regulatory element-binding protein (SREBP) processing and lipid biosynthesis. This is Glycerol kinase 5 (gk5) from Danio rerio (Zebrafish).